The chain runs to 241 residues: MORN repeat-containing protein 3 (241 aa).

Residues 6-35 (CPQKSEPLWKEWDQKAQKNGLRHQVFAVNG) are interaction with MDM2. MORN repeat units follow at residues 38–60 (YVGEWKDNVKHGKGTQVWKKNGA), 62–84 (YEGDWKSGKRDGYGTLSLPDQET), 91–113 (YSGWWKGDKKCGYGIQFFGPKEY), 114–136 (YEGDWCGNQRSGWGRMYYSNGDI), 137–159 (YEGQWRNDKPEGEGMLRLKNGNR), 160–182 (YEGNWQRGVKNGSGRFFHLDHGQ), and 184–205 (FEGFWVDDVAKCGTMIDFGRDE). An interaction with SIRT1 region spans residues 76-100 (TLSLPDQETGKYKRAYSGWWKGDKK). The interval 206–240 (APQPTQFPIPEVKILDPDGVLEEALAMFKKTKEEG) is interaction with TP53.

As to quaternary structure, interacts with MEIG1. Interacts with TP53, MDM2 and SIRT1; the interactions mediate post-transcriptional modifications of TP53 by MDM2 and SIRT1.

Its subcellular location is the cytoplasmic vesicle. The protein localises to the secretory vesicle. It localises to the acrosome. Its function is as follows. Assembles a suppression complex (suppresome) by tethering SIRT1 and MDM2 to regulate composite modifications of p53/TP53. Confers both deacetylation-mediated functional inactivation, by SIRT1, and ubiquitination-dependent degradation, by MDM2, of p53/TP53, promoting a proliferative and cell survival behaviors. May play a role in the regulation of spermatogenesis. The chain is MORN repeat-containing protein 3 (MORN3) from Bos taurus (Bovine).